The following is a 157-amino-acid chain: Endoribonuclease YbeY (157 aa).

Residues histidine 114, histidine 118, and histidine 124 each contribute to the Zn(2+) site.

Belongs to the endoribonuclease YbeY family. Requires Zn(2+) as cofactor.

It is found in the cytoplasm. Single strand-specific metallo-endoribonuclease involved in late-stage 70S ribosome quality control and in maturation of the 3' terminus of the 16S rRNA. The protein is Endoribonuclease YbeY of Yersinia enterocolitica serotype O:8 / biotype 1B (strain NCTC 13174 / 8081).